The following is a 327-amino-acid chain: FERM domain-containing protein 6 (327 aa).

One can recognise an FERM domain in the interval Arg16–Gln320.

It localises to the cytoplasm. The protein localises to the cell membrane. In Rattus norvegicus (Rat), this protein is FERM domain-containing protein 6 (Frmd6).